The chain runs to 533 residues: Probable nucleolar protein 5-2 (533 aa).

The Nop domain maps to 281 to 399; the sequence is IAPNLTALVG…LEARLRNLEG (119 aa). 2 disordered regions span residues 401–433 and 445–533; these read DLGRLSGSSKGKPKIEVYNKDKKMGSGGLITPA and GETS…KSKD. Residues 413–424 are compositionally biased toward basic and acidic residues; it reads PKIEVYNKDKKM. Residues 521–533 show a composition bias toward basic residues; sequence KKDKKEKKKKSKD.

The protein belongs to the NOP5/NOP56 family.

Its subcellular location is the nucleus. It localises to the nucleolus. Required for 60S ribosomal subunit biogenesis. This Arabidopsis thaliana (Mouse-ear cress) protein is Probable nucleolar protein 5-2 (NOP5-2).